Consider the following 1157-residue polypeptide: MSEPEVPFKVVAQFPYKSDYEDDLNFEKDQEIIVTSVEDAEWYFGEYQDSNGDVIEGIFPKSFVAVQGSEVGKEAESSPNTGSTEQRTIQPEVEQKDLPEPISPETKKETLSGPVPVPAATVPVPAATVPVPAATAVSAQVQHDSSSGNGERKVPMDSPKLKARLSMFNQDITEQVPLPKSTHLDLENIPVKKTIVADAPKYYVPPGIPTNDTSNLERKKSLKENEKKIVPEPINRAQVESGRIETENDQLKKDLPQMSLKERIALLQEQQRLQAAREEELLRKKAKLEQEHERSAVNKNEPYTETEEAEENEKTEPKPEFTPETEHNEEPQMELLAHKEITKTSREADEGTNDIEKEQFLDEYTKENQKVEESQADEARGENVAEESEIGYGHEDREGDNDEEKEEEDSEENRRAALRERMAKLSGASRFGAPVGFNPFGMASGVGNKPSEEPKKKQHKEKEEEEPEQLQELPRAIPVMPFVDPSSNPFFRKSNLSEKNQPTETKTLDPHATTEHEQKQEHGTHAYHNLAAVDNAHPEYSDHDSDEDTDDHEFEDANDGLRKHSMVEQAFQIGNNESENVNSGEKIYPQEPPISHRTAEVSHDIENSSQNTTGNVLPVSSPQTRVARNGSINSLTKSISGENRRKSINEYHDTVSTNSSALTETAQDISMAAPAAPVLSKVSHPEDKVPPHPVPSAPSAPPVPSAPSVPSAPPVPPAPPALSAPSVPPVPPVPPVSSAPPALSAPSIPPVPPTPPAPPAPPAPLALPKHNEVEEHVKSSAPLPPVSEEYHPMPNTAPPLPRAPPVPPATFEFDSEPTATHSHTAPSPPPHQNVTASTPSMMSTQQRVPTSVLSGAEKESRTLPPHVPSLTNRPVDSFHESDTTPKVASIRRSTTHDVGEISNNVKIEFNAQERWWINKSAPPAISNLKLNFLMEIDDHFISKRLHQKWVVRDFYFLFENYSQLRFSLTFNSTSPEKTVTTLQERFPSPVETQSARILDEYAQRFNAKVVEKSHSLINSHIGAKNFVSQIVSEFKDEVIQPIGARTFGATILSYKPEEGIEQLMKSLQKIKPGDILVIRKAKFEAHKKIGKNEIINVGMDSAAPYSSVVTDYDFTKNKFRVIENHEGKIIQNSYKLSHMKSGKLKVFRIVARGYVGW.

The region spanning 5-69 (EVPFKVVAQF…PKSFVAVQGS (65 aa)) is the SH3 domain. Disordered stretches follow at residues 68-116 (GSEV…GPVP) and 135-156 (TAVSAQVQHDSSSGNGERKVPM). Positions 77–89 (SSPNTGSTEQRTI) are enriched in polar residues. Residues 93–110 (VEQKDLPEPISPETKKET) are compositionally biased toward basic and acidic residues. Ser103 carries the post-translational modification Phosphoserine. Over residues 138 to 149 (SAQVQHDSSSGN) the composition is skewed to polar residues. Phosphoserine is present on residues Ser158 and Ser166. Disordered stretches follow at residues 231–256 (PEPINRAQVESGRIETENDQLKKDLP) and 284–888 (KKAK…PKVA). Coiled coils occupy residues 234-301 (INRA…NKNE) and 356-430 (EKEQ…GASR). 3 stretches are compositionally biased toward basic and acidic residues: residues 242 to 256 (GRIETENDQLKKDLP), 284 to 296 (KKAKLEQEHERSA), and 312 to 383 (NEKT…RGEN). Residues 398 to 411 (EGDNDEEKEEEDSE) are compositionally biased toward acidic residues. Basic and acidic residues-rich tracts occupy residues 412–423 (ENRRAALRERMA) and 506–524 (KTLDPHATTEHEQKQEHGT). Positions 544-558 (DSDEDTDDHEFEDAN) are enriched in acidic residues. Residue Ser565 is modified to Phosphoserine. The span at 574 to 585 (GNNESENVNSGE) shows a compositional bias: low complexity. The segment covering 597–606 (RTAEVSHDIE) has biased composition (basic and acidic residues). Residues 607–641 (NSSQNTTGNVLPVSSPQTRVARNGSINSLTKSISG) show a composition bias toward polar residues. A phosphoserine mark is found at Ser621, Ser631, and Ser634. A Phosphothreonine modification is found at Thr636. Ser638 and Ser647 each carry phosphoserine. Basic and acidic residues predominate over residues 642–653 (ENRRKSINEYHD). Positions 654 to 668 (TVSTNSSALTETAQD) are enriched in polar residues. Pro residues-rich tracts occupy residues 691 to 738 (PHPV…PVSS) and 747 to 765 (SIPPVPPTPPAPPAPPAPL). Residues 769–778 (KHNEVEEHVK) show a composition bias toward basic and acidic residues. A compositionally biased stretch (pro residues) spans 795–808 (NTAPPLPRAPPVPP). A compositionally biased stretch (polar residues) spans 832 to 853 (QNVTASTPSMMSTQQRVPTSVL). Thr850 is modified (phosphothreonine). Ser889 carries the phosphoserine modification. Phosphothreonine is present on residues Thr894 and Thr895. A Glycyl lysine isopeptide (Lys-Gly) (interchain with G-Cter in ubiquitin) cross-link involves residue Lys1012.

In terms of assembly, binds to the SH3 domains of the type I myosins MYO3 and MYO5.

The protein localises to the cytoplasm. It is found in the cytoskeleton. Its subcellular location is the actin patch. Functionally, involved in the regulation of actin cytoskeleton. This is Myosin tail region-interacting protein MTI1 (BBC1) from Saccharomyces cerevisiae (strain ATCC 204508 / S288c) (Baker's yeast).